The chain runs to 146 residues: Hemoglobin subunit beta (146 aa).

A Globin domain is found at 2–146 (HWSAEEKQLI…VAHSLARVYH (145 aa)). Residues His-63 and His-92 each contribute to the heme b site.

It belongs to the globin family. As to quaternary structure, heterotetramer of two alpha chains and two beta chains. In terms of tissue distribution, red blood cells.

Its function is as follows. Involved in oxygen transport from the lung to the various peripheral tissues. This Microcephalophis gracilis (Graceful small-headed sea snake) protein is Hemoglobin subunit beta (HBB).